The chain runs to 142 residues: Large ribosomal subunit protein uL13 (142 aa).

It belongs to the universal ribosomal protein uL13 family. As to quaternary structure, part of the 50S ribosomal subunit.

Functionally, this protein is one of the early assembly proteins of the 50S ribosomal subunit, although it is not seen to bind rRNA by itself. It is important during the early stages of 50S assembly. The chain is Large ribosomal subunit protein uL13 from Burkholderia mallei (strain NCTC 10247).